We begin with the raw amino-acid sequence, 498 residues long: Cytochrome P450 monooxygenase apdB (498 aa).

A helical membrane pass occupies residues 20–40 (ASPQVFKLFVLILFVLLVLKI). Cys-457 is a heme binding site.

The protein belongs to the cytochrome P450 family. Heme is required as a cofactor.

It is found in the membrane. It participates in secondary metabolite biosynthesis. Its function is as follows. Cytochrome P450 monooxygenase; part of the gene cluster that mediates the biosynthesis of aspyridones. The polyketide-amino acid backbone preaspyridone A is first assembled by the PKS-NRPS hybrid apdA. The assembly of preaspyridone A is initiated by loading of malonyl-CoA onto apdA, followed by decarboxylation to yield the acetyl starter unit. The growing polyketide chain then elongates into a tetraketide. The adpA PKS module catalyzes three Claisen condensations, as well as beta-keto processing and methylation. Alpha-methylation step during polyketide synthesis is a prerequisite and a key checkpoint for chain transfer between PKS and NRPS modules. The downstream NRPS module contains the condensation (C), adenylation (A), and thiolation (T) domains and catalyzes the incorporation of tyrosine via the formation of the L-tyrosinyl-thioester and the amide linkage between L-tyrosinyl-thioester and the tetraketide. The bimodular assembly line is terminated with a reductase (R) domain that facilitates formation and release of the tetramic acid product. Because apdA lacks a designated enoylreductase (ER) domain, the required activity is provided the enoyl reductase apdC. ApdC appears to operate with different stereoselectivity in different PKS cycle. Combined with apdC, apdA is proposed to synthesize preaspyridone A via about 20 enzymatic steps. A number of oxidative steps performed successively by the cytochrome P450 monooxygenases apdE and apdB are required for the conversion of preaspyridone A to aspyridone A. The cytochrome P450 monooxygenase apdE is responsible for the oxidative dephenylation of preaspyridone A. Finally, the predicted FAD-dependent monooxygenase apdD and the acyl-CoA dehydrogenase apdG may be involved in the transformation of aspyridone A into aspyridone B. This chain is Cytochrome P450 monooxygenase apdB, found in Emericella nidulans (strain FGSC A4 / ATCC 38163 / CBS 112.46 / NRRL 194 / M139) (Aspergillus nidulans).